Here is a 160-residue protein sequence, read N- to C-terminus: NADH-quinone oxidoreductase subunit I (160 aa).

4Fe-4S ferredoxin-type domains follow at residues 51–81 (LRRYDDGEERCIACKLCEAICPAQAITIEAA) and 91–120 (VRYDIDMTKCIYCGFCQEACPVDAIVEGPN). [4Fe-4S] cluster-binding residues include cysteine 61, cysteine 64, cysteine 67, cysteine 71, cysteine 100, cysteine 103, cysteine 106, and cysteine 110.

It belongs to the complex I 23 kDa subunit family. In terms of assembly, NDH-1 is composed of 14 different subunits. Subunits NuoA, H, J, K, L, M, N constitute the membrane sector of the complex. [4Fe-4S] cluster serves as cofactor.

The protein resides in the cell inner membrane. The catalysed reaction is a quinone + NADH + 5 H(+)(in) = a quinol + NAD(+) + 4 H(+)(out). In terms of biological role, NDH-1 shuttles electrons from NADH, via FMN and iron-sulfur (Fe-S) centers, to quinones in the respiratory chain. The immediate electron acceptor for the enzyme in this species is believed to be ubiquinone. Couples the redox reaction to proton translocation (for every two electrons transferred, four hydrogen ions are translocated across the cytoplasmic membrane), and thus conserves the redox energy in a proton gradient. This Anaplasma marginale (strain St. Maries) protein is NADH-quinone oxidoreductase subunit I.